The following is a 258-amino-acid chain: Very-long-chain aldehyde decarbonylase GL1-9 (258 aa).

5 consecutive transmembrane segments (helical) span residues 13 to 33 (MGTF…QLVL), 63 to 83 (GVLL…MVTS), 88 to 108 (VVVQ…MLVM), 149 to 169 (PLEG…VSGM), and 175 to 195 (VFFF…LWLP). Residues 101 to 237 (FLVAMLVMDS…FSIWDRILGT (137 aa)) enclose the Fatty acid hydroxylase domain.

The protein belongs to the sterol desaturase family. As to quaternary structure, homodimer.

The protein localises to the endoplasmic reticulum membrane. It carries out the reaction a long-chain fatty aldehyde + 2 NADPH + O2 + H(+) = a long-chain alkane + formate + 2 NADP(+) + H2O. Functionally, aldehyde decarbonylase involved in the conversion of aldehydes to alkanes. Core component of a very-long-chain alkane synthesis complex. In Oryza sativa subsp. indica (Rice), this protein is Very-long-chain aldehyde decarbonylase GL1-9.